The following is a 100-amino-acid chain: Aspartyl/glutamyl-tRNA(Asn/Gln) amidotransferase subunit C (100 aa).

This sequence belongs to the GatC family. Heterotrimer of A, B and C subunits.

It carries out the reaction L-glutamyl-tRNA(Gln) + L-glutamine + ATP + H2O = L-glutaminyl-tRNA(Gln) + L-glutamate + ADP + phosphate + H(+). The catalysed reaction is L-aspartyl-tRNA(Asn) + L-glutamine + ATP + H2O = L-asparaginyl-tRNA(Asn) + L-glutamate + ADP + phosphate + 2 H(+). Functionally, allows the formation of correctly charged Asn-tRNA(Asn) or Gln-tRNA(Gln) through the transamidation of misacylated Asp-tRNA(Asn) or Glu-tRNA(Gln) in organisms which lack either or both of asparaginyl-tRNA or glutaminyl-tRNA synthetases. The reaction takes place in the presence of glutamine and ATP through an activated phospho-Asp-tRNA(Asn) or phospho-Glu-tRNA(Gln). The chain is Aspartyl/glutamyl-tRNA(Asn/Gln) amidotransferase subunit C from Streptococcus pneumoniae (strain Hungary19A-6).